A 145-amino-acid chain; its full sequence is 3-dehydroquinate dehydratase (145 aa).

The active-site Proton acceptor is the tyrosine 23. 3 residues coordinate substrate: asparagine 75, histidine 81, and aspartate 88. Histidine 101 serves as the catalytic Proton donor. Residues 102 to 103 (IS) and arginine 112 contribute to the substrate site.

It belongs to the type-II 3-dehydroquinase family. Homododecamer.

The enzyme catalyses 3-dehydroquinate = 3-dehydroshikimate + H2O. The protein operates within metabolic intermediate biosynthesis; chorismate biosynthesis; chorismate from D-erythrose 4-phosphate and phosphoenolpyruvate: step 3/7. Functionally, catalyzes a trans-dehydration via an enolate intermediate. In Caldicellulosiruptor bescii (strain ATCC BAA-1888 / DSM 6725 / KCTC 15123 / Z-1320) (Anaerocellum thermophilum), this protein is 3-dehydroquinate dehydratase.